The sequence spans 480 residues: Cytochrome c oxidase subunit 1 (480 aa).

A helical transmembrane segment spans residues 22–42 (ISYLWLAYWFGMIGFYMSVLI). Ca(2+) is bound by residues Glu45 and Gly50. The next 8 helical transmembrane spans lie at 64 to 84 (LLFTLHGLIMVFFNIMTGLFG), 109 to 129 (SLLLQPIGFVLVVSSVYLEIG), 151 to 171 (LIIFGLLAAGIASTLSSINFI), 194 to 214 (IVLTSFLLLLSLPVVTAVFLM), 240 to 260 (LFWFFGHPEVYIMILPGFGII), 278 to 298 (MILAMGSIALLGCLVWGHHMY), 309 to 329 (YFTTVTILIALPTGNKIFNWV), and 343 to 363 (LILFAVLFIVNFVIGGTTGVV). His69 is a binding site for Fe(II)-heme a. His246 contacts Cu cation. Residues 246–250 (HPEVY) constitute a cross-link (1'-histidyl-3'-tyrosine (His-Tyr)). Tyr250 contributes to the O2 binding site. His295 and His296 together coordinate Cu cation. Mg(2+) is bound by residues His374 and Asp375. His382 is a binding site for heme a3. Helical transmembrane passes span 382-402 (HFHFVLSIGAIISLICFIVYI) and 416-436 (LSLMAPIFMIAVLFTFLPMHF). A Fe(II)-heme a-binding site is contributed by His384. Pro447 is a Ca(2+) binding site. The chain crosses the membrane as a helical span at residues 458–478 (FICTLGATMMLVLKLTVLFII).

The protein belongs to the heme-copper respiratory oxidase family. In terms of assembly, component of the cytochrome c oxidase (complex IV, CIV), a multisubunit enzyme composed of a catalytic core of 3 subunits and several supernumerary subunits. The complex exists as a monomer or a dimer and forms supercomplexes (SCs) in the inner mitochondrial membrane with ubiquinol-cytochrome c oxidoreductase (cytochrome b-c1 complex, complex III, CIII). It depends on heme as a cofactor. Requires Cu cation as cofactor.

It is found in the mitochondrion inner membrane. The enzyme catalyses 4 Fe(II)-[cytochrome c] + O2 + 8 H(+)(in) = 4 Fe(III)-[cytochrome c] + 2 H2O + 4 H(+)(out). Its pathway is energy metabolism; oxidative phosphorylation. Functionally, component of the cytochrome c oxidase, the last enzyme in the mitochondrial electron transport chain which drives oxidative phosphorylation. The respiratory chain contains 3 multisubunit complexes succinate dehydrogenase (complex II, CII), ubiquinol-cytochrome c oxidoreductase (cytochrome b-c1 complex, complex III, CIII) and cytochrome c oxidase (complex IV, CIV), that cooperate to transfer electrons derived from NADH and succinate to molecular oxygen, creating an electrochemical gradient over the inner membrane that drives transmembrane transport and the ATP synthase. Cytochrome c oxidase is the component of the respiratory chain that catalyzes the reduction of oxygen to water. Electrons originating from reduced cytochrome c in the intermembrane space (IMS) are transferred via the dinuclear copper A center (CU(A)) of subunit 2 and heme A of subunit 1 to the active site in subunit 1, a binuclear center (BNC) formed by heme A3 and copper B (CU(B)). The BNC reduces molecular oxygen to 2 water molecules using 4 electrons from cytochrome c in the IMS and 4 protons from the mitochondrial matrix. The sequence is that of Cytochrome c oxidase subunit 1 (MT-CO1) from Theileria annulata.